A 549-amino-acid polypeptide reads, in one-letter code: Undecaprenyl phosphate-alpha-4-amino-4-deoxy-L-arabinose arabinosyl transferase (549 aa).

The next 12 membrane-spanning stretches (helical) occupy residues 9-29 (LLLI…GLWI), 80-100 (LFGV…LAYL), 112-132 (SLAC…SGYA), 136-156 (PQFT…LDAG), 176-196 (FLTK…PYML), 204-224 (LLGY…PWAL), 256-276 (PWWF…GLLP), 288-308 (QPPV…FSLS), 312-332 (LPTY…HALV), 346-366 (NGLL…YLQL), 376-396 (FELF…LAQW), and 402-422 (AWAA…AAMP).

This sequence belongs to the glycosyltransferase 83 family.

The protein localises to the cell inner membrane. The catalysed reaction is 4-amino-4-deoxy-alpha-L-arabinopyranosyl di-trans,octa-cis-undecaprenyl phosphate + lipid IVA = lipid IIA + di-trans,octa-cis-undecaprenyl phosphate.. The protein operates within lipopolysaccharide metabolism; 4-amino-4-deoxy-beta-L-arabinose-lipid A biosynthesis. Its function is as follows. Catalyzes the transfer of the L-Ara4N moiety of the glycolipid undecaprenyl phosphate-alpha-L-Ara4N to lipid A. The modified arabinose is attached to lipid A and is required for resistance to polymyxin and cationic antimicrobial peptides. This chain is Undecaprenyl phosphate-alpha-4-amino-4-deoxy-L-arabinose arabinosyl transferase, found in Pseudomonas paraeruginosa (strain DSM 24068 / PA7) (Pseudomonas aeruginosa (strain PA7)).